Here is a 261-residue protein sequence, read N- to C-terminus: High-affinity zinc uptake system membrane protein ZnuB (261 aa).

7 helical membrane-spanning segments follow: residues 8 to 28, 54 to 74, 84 to 104, 125 to 145, 171 to 191, 214 to 234, and 236 to 256; these read ALLT…FVVW, VNPY…MVWL, TLLG…VGLL, TDLI…IYFW, ILMI…GALI, VGWA…LSAF, and DTAA…LSLF.

It belongs to the ABC-3 integral membrane protein family.

It is found in the cell inner membrane. In terms of biological role, involved in the high-affinity zinc uptake transport system. This is High-affinity zinc uptake system membrane protein ZnuB (znuB) from Haemophilus influenzae (strain ATCC 51907 / DSM 11121 / KW20 / Rd).